Here is a 1465-residue protein sequence, read N- to C-terminus: DNA polymerase III PolC-type (1465 aa).

The 153-residue stretch at 431–583 (DVETTGLSAM…YDAEATGRLL (153 aa)) folds into the Exonuclease domain.

The protein belongs to the DNA polymerase type-C family. PolC subfamily.

It is found in the cytoplasm. The catalysed reaction is DNA(n) + a 2'-deoxyribonucleoside 5'-triphosphate = DNA(n+1) + diphosphate. Required for replicative DNA synthesis. This DNA polymerase also exhibits 3' to 5' exonuclease activity. The protein is DNA polymerase III PolC-type of Streptococcus pyogenes.